We begin with the raw amino-acid sequence, 384 residues long: Secreted effector protein EspF(U) (384 aa).

Repeat copies occupy residues 96–142 (IXPA…AEHG), 143–189 (IQPA…AEHG), 190–236 (IQPA…AEHG), 237–283 (IZPA…AEHG), 284–330 (IQPA…AEHG), and 331–377 (IQPA…AEHG). The interval 96–377 (IXPARSMAEH…RLMQHLAEHG (282 aa)) is 6 X 48 AA approximate tandem repeats. Residues 247–266 (IPPAPNWPAPPPPVQNEQSR) are disordered. The segment covering 248–260 (PPAPNWPAPPPPV) has biased composition (pro residues).

The protein belongs to the EspF(U)/TccP family. In terms of assembly, interacts with host BAIAP2 and host WASL/N-WASP. Can also interact with host proteins BAIAP2L1 and WAS/WASP.

The protein localises to the secreted. The protein resides in the host cytoplasm. In terms of biological role, required for efficient pedestal formation in host epithelial cells during infection. Acts as an intermediate between Tir (via host BAIAP2) and host WASL/N-WASP. Directly binds and activates WASL/N-WASP, which stimulates actin polymerization and leads to the formation of actin pedestals at the sites of bacterial adhesion. This is Secreted effector protein EspF(U) (espF(U)) from Escherichia coli O157:H7.